The chain runs to 494 residues: ATP synthase subunit alpha, chloroplastic (494 aa).

170-177 serves as a coordination point for ATP; sequence GDRQTGKT.

It belongs to the ATPase alpha/beta chains family. In terms of assembly, F-type ATPases have 2 components, CF(1) - the catalytic core - and CF(0) - the membrane proton channel. CF(1) has five subunits: alpha(3), beta(3), gamma(1), delta(1), epsilon(1). CF(0) has four main subunits: a, b, b' and c.

Its subcellular location is the plastid. The protein resides in the chloroplast thylakoid membrane. The catalysed reaction is ATP + H2O + 4 H(+)(in) = ADP + phosphate + 5 H(+)(out). In terms of biological role, produces ATP from ADP in the presence of a proton gradient across the membrane. The alpha chain is a regulatory subunit. In Pinus thunbergii (Japanese black pine), this protein is ATP synthase subunit alpha, chloroplastic.